Here is a 338-residue protein sequence, read N- to C-terminus: Aspartate carbamoyltransferase catalytic subunit (338 aa).

Residues Arg59 and Thr60 each coordinate carbamoyl phosphate. Lys87 contacts L-aspartate. Carbamoyl phosphate-binding residues include Arg109, His142, and Gln145. The L-aspartate site is built by Arg182 and Arg253. Positions 294 and 295 each coordinate carbamoyl phosphate.

The protein belongs to the aspartate/ornithine carbamoyltransferase superfamily. ATCase family. In terms of assembly, heterododecamer (2C3:3R2) of six catalytic PyrB chains organized as two trimers (C3), and six regulatory PyrI chains organized as three dimers (R2).

The catalysed reaction is carbamoyl phosphate + L-aspartate = N-carbamoyl-L-aspartate + phosphate + H(+). The protein operates within pyrimidine metabolism; UMP biosynthesis via de novo pathway; (S)-dihydroorotate from bicarbonate: step 2/3. Catalyzes the condensation of carbamoyl phosphate and aspartate to form carbamoyl aspartate and inorganic phosphate, the committed step in the de novo pyrimidine nucleotide biosynthesis pathway. The chain is Aspartate carbamoyltransferase catalytic subunit from Prochlorococcus marinus (strain MIT 9515).